The sequence spans 213 residues: Probable anti-sigma-F factor NrsF (213 aa).

Helical transmembrane passes span Ala-27–Val-47, Leu-51–Ala-71, Val-91–Ile-111, Thr-126–Leu-146, Leu-159–His-179, and Phe-187–Gly-207.

Belongs to the NrsF anti-sigma-F factor family.

The protein resides in the cell inner membrane. In terms of biological role, probably an anti-sigma factor for extracytoplasmic function (ECF) sigma factor sigma-F (SigF), which responds to (hypo)chlorite. ECF sigma factors are held in an inactive form by a cognate anti-sigma factor. This is Probable anti-sigma-F factor NrsF from Azospira oryzae (strain ATCC BAA-33 / DSM 13638 / PS) (Dechlorosoma suillum).